Reading from the N-terminus, the 204-residue chain is Phosphoheptose isomerase (204 aa).

An SIS domain is found at 38 to 199; sequence MAVALARGGK…LFEAVMELGP (162 aa). 53–55 provides a ligand contact to substrate; the sequence is NGG. Positions 62 and 66 each coordinate Zn(2+). Residues Glu-66, 95–96, 121–123, Ser-126, and Gln-172 each bind substrate; these read ND and STS. 2 residues coordinate Zn(2+): Gln-172 and His-180.

Belongs to the SIS family. GmhA subfamily. In terms of assembly, homotetramer. Requires Zn(2+) as cofactor.

It is found in the cytoplasm. It carries out the reaction 2 D-sedoheptulose 7-phosphate = D-glycero-alpha-D-manno-heptose 7-phosphate + D-glycero-beta-D-manno-heptose 7-phosphate. Its pathway is carbohydrate biosynthesis; D-glycero-D-manno-heptose 7-phosphate biosynthesis; D-glycero-alpha-D-manno-heptose 7-phosphate and D-glycero-beta-D-manno-heptose 7-phosphate from sedoheptulose 7-phosphate: step 1/1. In terms of biological role, catalyzes the isomerization of sedoheptulose 7-phosphate in D-glycero-D-manno-heptose 7-phosphate. This chain is Phosphoheptose isomerase, found in Solidesulfovibrio magneticus (strain ATCC 700980 / DSM 13731 / RS-1) (Desulfovibrio magneticus).